Consider the following 355-residue polypeptide: Uroporphyrinogen decarboxylase (355 aa).

Residues 27-31, Asp78, Tyr155, Ser210, and His328 each bind substrate; that span reads RQAGR.

It belongs to the uroporphyrinogen decarboxylase family. As to quaternary structure, homodimer.

The protein localises to the cytoplasm. It catalyses the reaction uroporphyrinogen III + 4 H(+) = coproporphyrinogen III + 4 CO2. It participates in porphyrin-containing compound metabolism; protoporphyrin-IX biosynthesis; coproporphyrinogen-III from 5-aminolevulinate: step 4/4. Functionally, catalyzes the decarboxylation of four acetate groups of uroporphyrinogen-III to yield coproporphyrinogen-III. The protein is Uroporphyrinogen decarboxylase of Pseudomonas paraeruginosa (strain DSM 24068 / PA7) (Pseudomonas aeruginosa (strain PA7)).